A 326-amino-acid polypeptide reads, in one-letter code: DNA-directed RNA polymerase subunit alpha (326 aa).

Residues 1–232 (MQSATEFLKP…SQLSVFADLE (232 aa)) form an alpha N-terminal domain (alpha-NTD) region. The tract at residues 246–326 (VDPLLLRPVD…NWPPAGLERP (81 aa)) is alpha C-terminal domain (alpha-CTD).

The protein belongs to the RNA polymerase alpha chain family. In terms of assembly, homodimer. The RNAP catalytic core consists of 2 alpha, 1 beta, 1 beta' and 1 omega subunit. When a sigma factor is associated with the core the holoenzyme is formed, which can initiate transcription.

It catalyses the reaction RNA(n) + a ribonucleoside 5'-triphosphate = RNA(n+1) + diphosphate. Its function is as follows. DNA-dependent RNA polymerase catalyzes the transcription of DNA into RNA using the four ribonucleoside triphosphates as substrates. In Thiobacillus denitrificans (strain ATCC 25259 / T1), this protein is DNA-directed RNA polymerase subunit alpha.